Here is a 149-residue protein sequence, read N- to C-terminus: Large ribosomal subunit protein uL13 (149 aa).

This sequence belongs to the universal ribosomal protein uL13 family. As to quaternary structure, part of the 50S ribosomal subunit.

This protein is one of the early assembly proteins of the 50S ribosomal subunit, although it is not seen to bind rRNA by itself. It is important during the early stages of 50S assembly. In Saccharolobus solfataricus (strain ATCC 35092 / DSM 1617 / JCM 11322 / P2) (Sulfolobus solfataricus), this protein is Large ribosomal subunit protein uL13.